The sequence spans 316 residues: MTELYTAANPAEALKLVSLPEDELFVGATQLRRATFDNRITLCAIINARSGNCGMDCRFCSQSKHNHTPIETFSLLPDDELRGRILALGTQPVARIGVVTSGGALSGEEFDRLLGVLRSLPEYVLKRVCASLGKLSAVQLAQLMDIGLDRYHHNLETSRRYYPSICTTQTWDQRKATVERVFGAGMTACTGGLFGLGESWRDRIDFAFALKSLGVTHVPMNFLHPHPETPLAGQPPLTAGEALRIVAVFRHILPTATLRICGGRPLVLGARQKEIFAAGANALMTGDYLTTQGRGLVDDLAMIDSLGLEVDCDQSC.

Positions 36-264 (FDNRITLCAI…TATLRICGGR (229 aa)) constitute a Radical SAM core domain. The [4Fe-4S] cluster site is built by Cys-53, Cys-57, and Cys-60. 3 residues coordinate [2Fe-2S] cluster: Cys-129, Cys-189, and Arg-259.

The protein belongs to the radical SAM superfamily. Biotin synthase family. As to quaternary structure, homodimer. [4Fe-4S] cluster is required as a cofactor. Requires [2Fe-2S] cluster as cofactor.

The catalysed reaction is (4R,5S)-dethiobiotin + (sulfur carrier)-SH + 2 reduced [2Fe-2S]-[ferredoxin] + 2 S-adenosyl-L-methionine = (sulfur carrier)-H + biotin + 2 5'-deoxyadenosine + 2 L-methionine + 2 oxidized [2Fe-2S]-[ferredoxin]. The protein operates within cofactor biosynthesis; biotin biosynthesis; biotin from 7,8-diaminononanoate: step 2/2. Catalyzes the conversion of dethiobiotin (DTB) to biotin by the insertion of a sulfur atom into dethiobiotin via a radical-based mechanism. The protein is Biotin synthase of Desulfovibrio desulfuricans (strain ATCC 27774 / DSM 6949 / MB).